The chain runs to 198 residues: Recombination protein RecR (198 aa).

The C4-type zinc finger occupies 57–72; the sequence is CSVCGNLTDDDPCLIC. One can recognise a Toprim domain in the interval 80 to 175; that stretch reads SVILVVEDSK…KVTRLARGLA (96 aa).

Belongs to the RecR family.

May play a role in DNA repair. It seems to be involved in an RecBC-independent recombinational process of DNA repair. It may act with RecF and RecO. This Streptococcus agalactiae serotype Ia (strain ATCC 27591 / A909 / CDC SS700) protein is Recombination protein RecR.